A 216-amino-acid chain; its full sequence is Imidazole glycerol phosphate synthase subunit HisH (216 aa).

Positions 2–216 (RVAIIDYGSG…LITNFLRWRP (215 aa)) constitute a Glutamine amidotransferase type-1 domain. The active-site Nucleophile is the Cys88. Catalysis depends on residues His196 and Glu198.

Heterodimer of HisH and HisF.

The protein localises to the cytoplasm. The catalysed reaction is 5-[(5-phospho-1-deoxy-D-ribulos-1-ylimino)methylamino]-1-(5-phospho-beta-D-ribosyl)imidazole-4-carboxamide + L-glutamine = D-erythro-1-(imidazol-4-yl)glycerol 3-phosphate + 5-amino-1-(5-phospho-beta-D-ribosyl)imidazole-4-carboxamide + L-glutamate + H(+). It catalyses the reaction L-glutamine + H2O = L-glutamate + NH4(+). It functions in the pathway amino-acid biosynthesis; L-histidine biosynthesis; L-histidine from 5-phospho-alpha-D-ribose 1-diphosphate: step 5/9. Functionally, IGPS catalyzes the conversion of PRFAR and glutamine to IGP, AICAR and glutamate. The HisH subunit catalyzes the hydrolysis of glutamine to glutamate and ammonia as part of the synthesis of IGP and AICAR. The resulting ammonia molecule is channeled to the active site of HisF. This chain is Imidazole glycerol phosphate synthase subunit HisH, found in Mesorhizobium japonicum (strain LMG 29417 / CECT 9101 / MAFF 303099) (Mesorhizobium loti (strain MAFF 303099)).